A 241-amino-acid chain; its full sequence is RxLR effector protein SFI5 (241 aa).

An N-terminal signal peptide occupies residues 1 to 20 (MLRQARPLVVLIAVTFLVAS). The short motif at 44–62 (RLLRTHHATIKVNADSEER) is the RxLR-dEER element.

It belongs to the RxLR effector family.

It localises to the secreted. The protein resides in the host cell membrane. Its function is as follows. Effector that suppresses flg22-induced post-translational MAP kinase activation in tomato but not in Arabidopsis. The perception of highly conserved pathogen- or microbe-associated molecular patterns (PAMPs/MAMPs), such as flg22, triggers converging signaling pathways recruiting MAP kinase cascades and inducing transcriptional re-programming, yielding a generic antimicrobial response. The polypeptide is RxLR effector protein SFI5 (Phytophthora infestans (strain T30-4) (Potato late blight agent)).